A 196-amino-acid chain; its full sequence is Probable malonic semialdehyde reductase RutE (196 aa).

This sequence belongs to the nitroreductase family. HadB/RutE subfamily. FMN serves as cofactor.

It catalyses the reaction 3-hydroxypropanoate + NADP(+) = 3-oxopropanoate + NADPH + H(+). Functionally, may reduce toxic product malonic semialdehyde to 3-hydroxypropionic acid, which is excreted. The sequence is that of Probable malonic semialdehyde reductase RutE from Escherichia coli O45:K1 (strain S88 / ExPEC).